The chain runs to 538 residues: Capsular polysaccharide biosynthesis protein RkpI (538 aa).

A run of 6 helical transmembrane segments spans residues 16–36, 70–90, 114–134, 139–159, 170–190, and 212–232; these read LHDY…AVIF, VIAL…YAAA, LVFS…IFYA, IVFW…YMYF, LFWV…LFYG, and NTVR…WLGV.

It is found in the cell membrane. Its pathway is capsule biogenesis; capsule polysaccharide biosynthesis. Functionally, involved in antigen K (capsular polysaccharide) biosynthesis. The protein is Capsular polysaccharide biosynthesis protein RkpI (rkpI) of Rhizobium meliloti (strain 1021) (Ensifer meliloti).